The primary structure comprises 551 residues: MFS efflux transporter aclA (551 aa).

Helical transmembrane passes span 26 to 46 (WAVF…ITAI), 64 to 84 (VWIA…IGQI), 93 to 113 (PMII…GATS), 125 to 145 (GLGA…LVPL), 154 to 174 (IALS…GALV), 181 to 201 (WVFY…VLCL), 220 to 240 (WVGN…LVIG), and 251 to 271 (VLVP…FEAS). Residue Asn-286 is glycosylated (N-linked (GlcNAc...) asparagine). 6 helical membrane-spanning segments follow: residues 294–314 (VLAF…TLFF), 327–347 (VDVI…GAIM), 356–376 (LHWA…TWDA), 385–405 (ILQC…LPAI), 420–440 (AYAF…AVVF), and 492–512 (LRTV…LVVV).

It belongs to the major facilitator superfamily.

The protein resides in the membrane. MFS efflux transporter; part of the gene cluster that mediates the biosynthesis of aspirochlorine (or antibiotic A30641), an unusual halogenated spiro compound with distinctive antifungal properties due to selective inhibition of protein biosynthesis, and which is also active against bacteria, viruses, and murine tumor cells. The chain is MFS efflux transporter aclA from Aspergillus oryzae (strain ATCC 42149 / RIB 40) (Yellow koji mold).